The following is a 346-amino-acid chain: Formimidoylglutamase (346 aa).

Positions 145, 180, 182, 184, 271, and 273 each coordinate Mn(2+).

This sequence belongs to the arginase family. Mn(2+) serves as cofactor.

It carries out the reaction N-formimidoyl-L-glutamate + H2O = formamide + L-glutamate. It functions in the pathway amino-acid degradation; L-histidine degradation into L-glutamate; L-glutamate from N-formimidoyl-L-glutamate (hydrolase route): step 1/1. Catalyzes the conversion of N-formimidoyl-L-glutamate to L-glutamate and formamide. The sequence is that of Formimidoylglutamase from Psychrobacter cryohalolentis (strain ATCC BAA-1226 / DSM 17306 / VKM B-2378 / K5).